Here is a 260-residue protein sequence, read N- to C-terminus: UPF0294 protein YPO1077/y3099/YP_2772 (260 aa).

It belongs to the UPF0294 family.

The protein localises to the cytoplasm. In Yersinia pestis, this protein is UPF0294 protein YPO1077/y3099/YP_2772.